We begin with the raw amino-acid sequence, 60 residues long: Cecropin-B type 1 (60 aa).

The signal sequence occupies residues 1-24; it reads MNFNKLFALVLLIGLVLLTGQTEA. Ile-58 bears the Isoleucine amide mark.

Belongs to the cecropin family.

It localises to the secreted. Cecropins have lytic and antibacterial activity against several Gram-positive and Gram-negative bacteria. The polypeptide is Cecropin-B type 1 (CECB1) (Aedes albopictus (Asian tiger mosquito)).